A 191-amino-acid chain; its full sequence is Peptidyl-tRNA hydrolase (191 aa).

Residue Y17 participates in tRNA binding. The active-site Proton acceptor is the H22. Positions 68, 70, and 116 each coordinate tRNA.

Belongs to the PTH family. In terms of assembly, monomer.

The protein localises to the cytoplasm. It carries out the reaction an N-acyl-L-alpha-aminoacyl-tRNA + H2O = an N-acyl-L-amino acid + a tRNA + H(+). Its function is as follows. Hydrolyzes ribosome-free peptidyl-tRNAs (with 1 or more amino acids incorporated), which drop off the ribosome during protein synthesis, or as a result of ribosome stalling. Functionally, catalyzes the release of premature peptidyl moieties from peptidyl-tRNA molecules trapped in stalled 50S ribosomal subunits, and thus maintains levels of free tRNAs and 50S ribosomes. The chain is Peptidyl-tRNA hydrolase from Mycobacterium marinum (strain ATCC BAA-535 / M).